Here is a 176-residue protein sequence, read N- to C-terminus: Ribosome maturation factor RimM (176 aa).

The 81-residue stretch at 96-176 folds into the PRC barrel domain; the sequence is PADEFYWRDL…QILVDWDPDF (81 aa).

This sequence belongs to the RimM family. As to quaternary structure, binds ribosomal protein uS19.

It localises to the cytoplasm. Functionally, an accessory protein needed during the final step in the assembly of 30S ribosomal subunit, possibly for assembly of the head region. Essential for efficient processing of 16S rRNA. May be needed both before and after RbfA during the maturation of 16S rRNA. It has affinity for free ribosomal 30S subunits but not for 70S ribosomes. The chain is Ribosome maturation factor RimM from Shewanella baltica (strain OS223).